The following is a 101-amino-acid chain: Small ribosomal subunit protein uS14 (101 aa).

The protein belongs to the universal ribosomal protein uS14 family. As to quaternary structure, part of the 30S ribosomal subunit. Contacts proteins S3 and S10.

In terms of biological role, binds 16S rRNA, required for the assembly of 30S particles and may also be responsible for determining the conformation of the 16S rRNA at the A site. This chain is Small ribosomal subunit protein uS14, found in Hydrogenovibrio crunogenus (strain DSM 25203 / XCL-2) (Thiomicrospira crunogena).